Here is a 53-residue protein sequence, read N- to C-terminus: UPF0391 membrane protein BP1737 (53 aa).

A run of 2 helical transmembrane segments spans residues 5 to 25 (AVVF…GIAA) and 30 to 50 (IAKI…LGGV).

It belongs to the UPF0391 family.

The protein localises to the cell membrane. This chain is UPF0391 membrane protein BP1737, found in Bordetella pertussis (strain Tohama I / ATCC BAA-589 / NCTC 13251).